An 845-amino-acid chain; its full sequence is Synaptonemal complex protein 1 (845 aa).

Positions 59–215 are interaction with SYCE3; that stretch reads ETRQVYVDLN…YQLTEEKEAQ (157 aa). 2 coiled-coil regions span residues 64-211 and 244-544; these read YVDL…LTEE and LRTE…EIEV. The segment at 550–644 is required for pH-induced assembly of C-terminal ends into antiparallel tetramers; that stretch reads EKLLGEVEKA…VSLKKQLEIE (95 aa). Residues 553-556 carry the Nuclear localization signal motif; that stretch reads LGEV. The stretch at 620–663 forms a coiled coil; that stretch reads KTALETELSNIRNELVSLKKQLEIEREEKEKLKLEKENTAILKD. The tract at residues 657–845 is DNA-binding; sequence NTAILKDKKD…RLKEAEKLFA (189 aa). S676 carries the post-translational modification Phosphoserine. A compositionally biased stretch (polar residues) spans 684–703; the sequence is FDSKTTPSQNISRISSSMES. Residues 684–709 form a disordered region; the sequence is FDSKTTPSQNISRISSSMESGKTKDN. Residues 753 to 756 carry the Nuclear localization signal motif; that stretch reads KKRK. The interval 786 to 808 is disordered; it reads LYNNNSPNSHLTPKQTPLSLSTP.

Structural component of synaptonemal complexes. Homotetramer that consists of an N-terminal four-helical bundle that bifurcates into two elongated C-terminal dimeric coiled coils. This tetrameric building block potentially self-assembles into a supramolecular zipper-like lattice to mediate meiotic chromosome synapsis. Self-assembly is likely initiated by local proton density at chromosome axis, which is predicted to trigger antiparallel back to back assembly of adjacent C-terminal ends into tetrameric structures that anchor to chromosomal DNA. Then the N-terminal ends are predicted to undergo cooperative antiparallel head to head assembly at the midline of synaptonemal complexes central element to form a zipper-like lattice between properly aligned homologous chromosomes. The nascent synapsis generated by SYCP1 is stabilized through interaction with central element proteins SYCE1 and SYCE2. Interacts (via tetrameric core) with SYCE3; the interaction remodels SYCP1 homotetramers to 2:1 heterotrimers with SYCE3. SYCP1/SYCE3 heterotrimers form lattice assemblies as part of the mature synaptonemal complex via both lateral and head-to-head interactions. Forms a complex with EWSR1, PRDM9, SYCP3 and REC8; complex formation is dependent of phosphorylated form of REC8 and requires PRDM9 bound to hotspot DNA; EWSR1 joins PRDM9 with the chromosomal axis through REC8. Interacts with SPO16.

It is found in the nucleus. The protein resides in the chromosome. It localises to the centromere. In terms of biological role, major component of the transverse filaments of synaptonemal complexes, formed between homologous chromosomes during meiotic prophase. Required for normal assembly of the central element of the synaptonemal complexes. Required for normal centromere pairing during meiosis. Required for normal meiotic chromosome synapsis during oocyte and spermatocyte development and for normal male and female fertility. This is Synaptonemal complex protein 1 from Mesocricetus auratus (Golden hamster).